Reading from the N-terminus, the 1368-residue chain is DNA-directed RNA polymerase subunit beta (1368 aa).

The protein belongs to the RNA polymerase beta chain family. The RNAP catalytic core consists of 2 alpha, 1 beta, 1 beta' and 1 omega subunit. When a sigma factor is associated with the core the holoenzyme is formed, which can initiate transcription.

The catalysed reaction is RNA(n) + a ribonucleoside 5'-triphosphate = RNA(n+1) + diphosphate. Its function is as follows. DNA-dependent RNA polymerase catalyzes the transcription of DNA into RNA using the four ribonucleoside triphosphates as substrates. This chain is DNA-directed RNA polymerase subunit beta, found in Burkholderia cenocepacia (strain HI2424).